A 320-amino-acid chain; its full sequence is Putative FBD-associated F-box protein At3g60710 (320 aa).

The F-box domain maps to 2–48 (EDLISQLPNELLQEILLNLPTSESVRTSVLPTRWRNLWQSVPGLYLI). In terms of domain architecture, FBD spans 212-268 (MEEIASSPVPKCLQTSIENVKIKMTPKADQEKSRKAETEVANYILENATLLKLTLWL).

This is Putative FBD-associated F-box protein At3g60710 from Arabidopsis thaliana (Mouse-ear cress).